A 479-amino-acid chain; its full sequence is Mannose-1-phosphate guanylyltransferase RfbM (479 aa).

This sequence belongs to the mannose-6-phosphate isomerase type 2 family. In terms of assembly, homodimer.

The enzyme catalyses alpha-D-mannose 1-phosphate + GTP + H(+) = GDP-alpha-D-mannose + diphosphate. The protein operates within nucleotide-sugar biosynthesis; GDP-alpha-D-mannose biosynthesis; GDP-alpha-D-mannose from alpha-D-mannose 1-phosphate (GTP route): step 1/1. It participates in bacterial outer membrane biogenesis; LPS O-antigen biosynthesis. In terms of biological role, involved in GDP-mannose biosynthesis which serves as the activated sugar nucleotide precursor for mannose residues in cell surface polysaccharides. This enzyme participates in synthesis of the LPS group B O antigen. The polypeptide is Mannose-1-phosphate guanylyltransferase RfbM (rfbM) (Salmonella typhimurium (strain LT2 / SGSC1412 / ATCC 700720)).